The following is a 589-amino-acid chain: ABC transporter G family member 8 (589 aa).

An ABC transporter domain is found at 16–261; sequence LTTSSISYTI…LLFKGFTVPP (246 aa). An ATP-binding site is contributed by 62 to 69; the sequence is GPSGAGKS. The ABC transmembrane type-2 domain occupies 311–521; it reads TEISLLARRF…ALDALLINEY (211 aa). 7 helical membrane passes run 335–355, 365–385, 412–432, 441–461, 470–490, 499–519, and 560–580; these read ALEA…IGIG, MFAF…PIFI, VFLP…YFLI, FGYF…FVLF, ITGT…SGYF, YWLF…LLIN, and FNVY…FLAL.

It belongs to the ABC transporter superfamily. ABCG family. Eye pigment precursor importer (TC 3.A.1.204) subfamily.

It localises to the membrane. The polypeptide is ABC transporter G family member 8 (ABCG8) (Arabidopsis thaliana (Mouse-ear cress)).